We begin with the raw amino-acid sequence, 257 residues long: tRNA pseudouridine synthase A (257 aa).

Residue aspartate 53 is the Nucleophile of the active site. Residue tyrosine 111 coordinates substrate.

The protein belongs to the tRNA pseudouridine synthase TruA family. In terms of assembly, homodimer.

The catalysed reaction is uridine(38/39/40) in tRNA = pseudouridine(38/39/40) in tRNA. In terms of biological role, formation of pseudouridine at positions 38, 39 and 40 in the anticodon stem and loop of transfer RNAs. The protein is tRNA pseudouridine synthase A of Xylella fastidiosa (strain M23).